A 141-amino-acid polypeptide reads, in one-letter code: MEQTLSIIKPDSVGKAHIGEIIAIFEKSGLRIAAMKMVHLSVKEAEGFYVVHKERPFFQELVDFMISGPVVVMVLQGENAVDRNRELMGATNPKEAAEGSIRALFGESIGVNAVHGSDSLENAAIEVSYFFAKTEIVNSVA.

The ATP site is built by Lys9, Phe57, Arg85, Thr91, Arg102, and Asn112. His115 acts as the Pros-phosphohistidine intermediate in catalysis.

It belongs to the NDK family. As to quaternary structure, homotetramer. The cofactor is Mg(2+).

The protein localises to the cytoplasm. The catalysed reaction is a 2'-deoxyribonucleoside 5'-diphosphate + ATP = a 2'-deoxyribonucleoside 5'-triphosphate + ADP. It catalyses the reaction a ribonucleoside 5'-diphosphate + ATP = a ribonucleoside 5'-triphosphate + ADP. In terms of biological role, major role in the synthesis of nucleoside triphosphates other than ATP. The ATP gamma phosphate is transferred to the NDP beta phosphate via a ping-pong mechanism, using a phosphorylated active-site intermediate. In Chlamydia trachomatis serovar D (strain ATCC VR-885 / DSM 19411 / UW-3/Cx), this protein is Nucleoside diphosphate kinase.